Reading from the N-terminus, the 223-residue chain is Ribonuclease HII (223 aa).

One can recognise an RNase H type-2 domain in the interval 32 to 223 (LYIAGVDEVG…LKKRYRDYMS (192 aa)). Asp38, Glu39, and Asp130 together coordinate a divalent metal cation.

This sequence belongs to the RNase HII family. Requires Mn(2+) as cofactor. The cofactor is Mg(2+).

The protein localises to the cytoplasm. It catalyses the reaction Endonucleolytic cleavage to 5'-phosphomonoester.. Its function is as follows. Endonuclease that specifically degrades the RNA of RNA-DNA hybrids. In Bartonella henselae (strain ATCC 49882 / DSM 28221 / CCUG 30454 / Houston 1) (Rochalimaea henselae), this protein is Ribonuclease HII.